The sequence spans 380 residues: Succinyl-diaminopimelate desuccinylase (380 aa).

His-68 lines the Zn(2+) pocket. The active site involves Asp-70. A Zn(2+)-binding site is contributed by Asp-101. The active-site Proton acceptor is the Glu-135. Zn(2+)-binding residues include Glu-136, Glu-164, and His-350.

This sequence belongs to the peptidase M20A family. DapE subfamily. Homodimer. Zn(2+) serves as cofactor. Requires Co(2+) as cofactor.

It carries out the reaction N-succinyl-(2S,6S)-2,6-diaminopimelate + H2O = (2S,6S)-2,6-diaminopimelate + succinate. The protein operates within amino-acid biosynthesis; L-lysine biosynthesis via DAP pathway; LL-2,6-diaminopimelate from (S)-tetrahydrodipicolinate (succinylase route): step 3/3. Functionally, catalyzes the hydrolysis of N-succinyl-L,L-diaminopimelic acid (SDAP), forming succinate and LL-2,6-diaminopimelate (DAP), an intermediate involved in the bacterial biosynthesis of lysine and meso-diaminopimelic acid, an essential component of bacterial cell walls. The chain is Succinyl-diaminopimelate desuccinylase from Tolumonas auensis (strain DSM 9187 / NBRC 110442 / TA 4).